We begin with the raw amino-acid sequence, 487 residues long: Glutamyl-tRNA(Gln) amidotransferase subunit A (487 aa).

Residue lysine 78 is the Charge relay system of the active site. Residues 135-144 (SAYQTTTNPW) are compositionally biased toward polar residues. The tract at residues 135–155 (SAYQTTTNPWDASRVPGGSSG) is disordered. Serine 153 serves as the catalytic Charge relay system. Catalysis depends on serine 177, which acts as the Acyl-ester intermediate.

This sequence belongs to the amidase family. GatA subfamily. Heterotrimer of A, B and C subunits.

It carries out the reaction L-glutamyl-tRNA(Gln) + L-glutamine + ATP + H2O = L-glutaminyl-tRNA(Gln) + L-glutamate + ADP + phosphate + H(+). Functionally, allows the formation of correctly charged Gln-tRNA(Gln) through the transamidation of misacylated Glu-tRNA(Gln) in organisms which lack glutaminyl-tRNA synthetase. The reaction takes place in the presence of glutamine and ATP through an activated gamma-phospho-Glu-tRNA(Gln). In Maridesulfovibrio salexigens (strain ATCC 14822 / DSM 2638 / NCIMB 8403 / VKM B-1763) (Desulfovibrio salexigens), this protein is Glutamyl-tRNA(Gln) amidotransferase subunit A.